The following is an 82-amino-acid chain: Putative membrane protein insertion efficiency factor (82 aa).

This sequence belongs to the UPF0161 family.

The protein localises to the cell membrane. Functionally, could be involved in insertion of integral membrane proteins into the membrane. This chain is Putative membrane protein insertion efficiency factor, found in Streptococcus uberis (strain ATCC BAA-854 / 0140J).